The chain runs to 595 residues: Beta-hexosaminidase 1 (595 aa).

The N-terminal stretch at 1-20 (MRFAYLATLAGSLLAGLAQA) is a signal peptide. The N-linked (GlcNAc...) asparagine glycan is linked to N313.

The protein belongs to the glycosyl hydrolase 20 family.

It catalyses the reaction Hydrolysis of terminal non-reducing N-acetyl-D-hexosamine residues in N-acetyl-beta-D-hexosaminides.. Its function is as follows. Beta-hexosaminidase that shows a broad substrate specificity. The chain is Beta-hexosaminidase 1 from Coccidioides posadasii (strain RMSCC 757 / Silveira) (Valley fever fungus).